The sequence spans 418 residues: Lactosylceramide alpha-2,3-sialyltransferase (418 aa).

The interval 1–25 (MRTKAAGCAERRPLQPRTEAAAAPA) is disordered. Topologically, residues 1–61 (MRTKAAGCAE…RAQSKMRRPS (61 aa)) are cytoplasmic. The chain crosses the membrane as a helical; Signal-anchor for type II membrane protein span at residues 62–82 (LLLKDILKCTLLVFGVWILYI). Residues 83–418 (LKLNYTTEEC…DLSGGIDREF (336 aa)) lie on the Lumenal side of the membrane. Residues Asn-86, Asn-236, and Asn-390 are each glycosylated (N-linked (GlcNAc...) asparagine). Cys-195 and Cys-353 form a disulfide bridge.

This sequence belongs to the glycosyltransferase 29 family. In terms of processing, N-glycosylated. Ubiquitous. High expression in brain, skeletal muscle, placenta, and testis. mRNA widely distributed in human brain, but slightly elevated expression was observed in the cerebral cortex, temporal lobe, and putamen.

It is found in the golgi apparatus membrane. It catalyses the reaction a beta-D-Gal-(1-&gt;4)-beta-D-Glc-(1&lt;-&gt;1)-Cer(d18:1(4E)) + CMP-N-acetyl-beta-neuraminate = a ganglioside GM3 (d18:1(4E)) + CMP + H(+). It carries out the reaction ganglioside GA2 (d18:1(4E)/18:0) + CMP-N-acetyl-beta-neuraminate = ganglioside GM2 (d18:1(4E)/18:0) + CMP + H(+). The catalysed reaction is a beta-D-Gal-(1&lt;-&gt;1')-ceramide + CMP-N-acetyl-beta-neuraminate = N-acetyl-alpha-neuraminosyl-(2-&gt;3)-beta-D-galactosyl-(1&lt;-&gt;1')-ceramide + CMP + H(+). The enzyme catalyses a beta-D-galactosyl-(1&lt;-&gt;1')-N-acylsphing-4-enine + CMP-N-acetyl-beta-neuraminate = a ganglioside GM4 (d18:1(4E)) + CMP + H(+). It catalyses the reaction ganglioside GA1 (d18:1(4E)/18:0) + CMP-N-acetyl-beta-neuraminate = ganglioside GM1 (d18:1(4E)/18:0) + CMP + H(+). It functions in the pathway glycolipid biosynthesis. Transfers the sialyl group (N-acetyl-alpha-neuraminyl or NeuAc) from CMP-NeuAc to the non-reducing terminal galactose (Gal) of glycosphingolipids forming gangliosides (important molecules involved in the regulation of multiple cellular processes, including cell proliferation and differentiation, apoptosis, embryogenesis, development, and oncogenesis). Mainly involved in the biosynthesis of ganglioside GM3 but can also use different glycolipids as substrate acceptors such as D-galactosylceramide (GalCer), asialo-GM2 (GA2) and asialo-GM1 (GA1), although less preferentially than beta-D-Gal-(1-&gt;4)-beta-D-Glc-(1&lt;-&gt;1)-Cer (LacCer). The polypeptide is Lactosylceramide alpha-2,3-sialyltransferase (ST3GAL5) (Homo sapiens (Human)).